Here is a 334-residue protein sequence, read N- to C-terminus: L-lactate dehydrogenase B chain (334 aa).

N-acetylalanine is present on A2. K7 bears the N6-acetyllysine mark. NAD(+) is bound by residues 30 to 58 (GQVG…LEDK) and R100. Phosphoserine is present on S44. The residue at position 58 (K58) is an N6-acetyllysine. Residue R107 coordinates substrate. Residue K119 is modified to N6-acetyllysine. Residue N139 participates in NAD(+) binding. Substrate is bound by residues N139 and R170. H194 acts as the Proton acceptor in catalysis. Y240 is modified (phosphotyrosine). T249 contributes to the substrate binding site. K329 bears the N6-acetyllysine mark.

It belongs to the LDH/MDH superfamily. LDH family. As to quaternary structure, homotetramer. Interacts with PTEN upstream reading frame protein MP31; the interaction leads to inhibition of mitochondrial lactate dehydrogenase activity, preventing conversion of lactate to pyruvate in mitochondria.

Its subcellular location is the cytoplasm. It localises to the mitochondrion inner membrane. It catalyses the reaction (S)-lactate + NAD(+) = pyruvate + NADH + H(+). The protein operates within fermentation; pyruvate fermentation to lactate; (S)-lactate from pyruvate: step 1/1. Its function is as follows. Interconverts simultaneously and stereospecifically pyruvate and lactate with concomitant interconversion of NADH and NAD(+). The chain is L-lactate dehydrogenase B chain (LDHB) from Sus scrofa (Pig).